The chain runs to 304 residues: ATP phosphoribosyltransferase (304 aa).

This sequence belongs to the ATP phosphoribosyltransferase family. Long subfamily. The cofactor is Mg(2+).

The protein resides in the cytoplasm. It catalyses the reaction 1-(5-phospho-beta-D-ribosyl)-ATP + diphosphate = 5-phospho-alpha-D-ribose 1-diphosphate + ATP. It participates in amino-acid biosynthesis; L-histidine biosynthesis; L-histidine from 5-phospho-alpha-D-ribose 1-diphosphate: step 1/9. Feedback inhibited by histidine. Its function is as follows. Catalyzes the condensation of ATP and 5-phosphoribose 1-diphosphate to form N'-(5'-phosphoribosyl)-ATP (PR-ATP). Has a crucial role in the pathway because the rate of histidine biosynthesis seems to be controlled primarily by regulation of HisG enzymatic activity. The sequence is that of ATP phosphoribosyltransferase from Xylella fastidiosa (strain M12).